The chain runs to 643 residues: 3D-(3,5/4)-trihydroxycyclohexane-1,2-dione hydrolase (643 aa).

Glutamate 65 contributes to the thiamine diphosphate binding site. A thiamine pyrophosphate binding region spans residues serine 441 to glycine 521. Aspartate 492 and asparagine 519 together coordinate Mg(2+).

It belongs to the TPP enzyme family. The cofactor is Mg(2+). Thiamine diphosphate is required as a cofactor.

The catalysed reaction is 3D-3,5/4-trihydroxycyclohexane-1,2-dione + H2O = 5-deoxy-D-glucuronate + H(+). It participates in polyol metabolism; myo-inositol degradation into acetyl-CoA; acetyl-CoA from myo-inositol: step 3/7. Its function is as follows. Involved in the cleavage of the C1-C2 bond of 3D-(3,5/4)-trihydroxycyclohexane-1,2-dione (THcHDO) to yield 5-deoxy-glucuronate (5DG). The protein is 3D-(3,5/4)-trihydroxycyclohexane-1,2-dione hydrolase of Clostridium botulinum (strain Eklund 17B / Type B).